The primary structure comprises 639 residues: Chaperone protein HtpG (639 aa).

Residues 1-347 (MSQQETHGFQ…SNDLPLNVSR (347 aa)) form an a; substrate-binding region. Residues 348–564 (EILQDNKVTT…EGEMSTQMIK (217 aa)) are b. The interval 565–639 (LMQAAGQDVP…MNQMLLASVK (75 aa)) is c.

The protein belongs to the heat shock protein 90 family. Homodimer.

Its subcellular location is the cytoplasm. Molecular chaperone. Has ATPase activity. This Shewanella halifaxensis (strain HAW-EB4) protein is Chaperone protein HtpG.